The sequence spans 191 residues: Flagellar transcriptional regulator FlhC (191 aa).

Positions 139, 142, 159, and 162 each coordinate Zn(2+).

It belongs to the FlhC family. Heterohexamer composed of two FlhC and four FlhD subunits. Each FlhC binds a FlhD dimer, forming a heterotrimer, and a hexamer assembles by dimerization of two heterotrimers. Requires Zn(2+) as cofactor.

It localises to the cytoplasm. Functionally, functions in complex with FlhD as a master transcriptional regulator that regulates transcription of several flagellar and non-flagellar operons by binding to their promoter region. Activates expression of class 2 flagellar genes, including fliA, which is a flagellum-specific sigma factor that turns on the class 3 genes. Also regulates genes whose products function in a variety of physiological pathways. The sequence is that of Flagellar transcriptional regulator FlhC from Enterobacter cloacae subsp. cloacae (strain ATCC 13047 / DSM 30054 / NBRC 13535 / NCTC 10005 / WDCM 00083 / NCDC 279-56).